Here is a 681-residue protein sequence, read N- to C-terminus: Methionine--tRNA ligase (681 aa).

The 'HIGH' region motif lies at 14–24 (PYANGSIHLGH). Zn(2+) contacts are provided by Cys145, Cys148, Cys158, and Cys161. The short motif at 331-335 (KMSKS) is the 'KMSKS' region element. An ATP-binding site is contributed by Lys334. Residues 579–681 (TFAAVDLRVA…SGAKPGQRIK (103 aa)) form the tRNA-binding domain.

This sequence belongs to the class-I aminoacyl-tRNA synthetase family. MetG type 1 subfamily. As to quaternary structure, homodimer. Zn(2+) serves as cofactor.

It is found in the cytoplasm. The enzyme catalyses tRNA(Met) + L-methionine + ATP = L-methionyl-tRNA(Met) + AMP + diphosphate. Is required not only for elongation of protein synthesis but also for the initiation of all mRNA translation through initiator tRNA(fMet) aminoacylation. The polypeptide is Methionine--tRNA ligase (Pseudomonas putida (strain W619)).